A 190-amino-acid polypeptide reads, in one-letter code: Small ribosomal subunit protein uS7 (190 aa).

Thr2 carries the post-translational modification N-acetylthreonine.

It belongs to the universal ribosomal protein uS7 family. Component of the small ribosomal subunit. Part of the small subunit (SSU) processome, composed of more than 70 proteins and the RNA chaperone small nucleolar RNA (snoRNA) U3.

It localises to the cytoplasm. The protein localises to the nucleus. The protein resides in the nucleolus. In terms of biological role, component of the small ribosomal subunit. The ribosome is a large ribonucleoprotein complex responsible for the synthesis of proteins in the cell. Part of the small subunit (SSU) processome, first precursor of the small eukaryotic ribosomal subunit. During the assembly of the SSU processome in the nucleolus, many ribosome biogenesis factors, an RNA chaperone and ribosomal proteins associate with the nascent pre-rRNA and work in concert to generate RNA folding, modifications, rearrangements and cleavage as well as targeted degradation of pre-ribosomal RNA by the RNA exosome. This chain is Small ribosomal subunit protein uS7 (rps5), found in Dictyostelium discoideum (Social amoeba).